The primary structure comprises 407 residues: MVHIQADGARSTAVILVAAGRGERAGASSEGPKQYRRIGGKPVIVHSLLGFADLLPQATLIVVIHPDDGALLANALAPYPQLAASLTITHGGKTRQQSVLAGLRALRNQKPDYVLIHDAVRPFFDQLMLQRIIARLDDGADAVLPAIPVTDTLKRGDEGARVVDTVARSGLFAAQTPQSFHFAKILAAHEDAASAGREDFTDDAAIAEWAGLTVHLVEGSPDNVKLTVKRDLEMADARLSHNALPDVRTGNGYDVHQLVPGDGVTLCGIFIAHDQALSGHSDADVALHALTDALLATCGAGDIGDHFPPSDPQWRGAASRIFLEHAANIVRDAGGTIMNADISLIAEAPKIGPHRQIMREKLSEILGIALERCSVKATTNEKIGFVGRGEGIAAIATATVVFQGKPQ.

Residues 1–247 form a 2-C-methyl-D-erythritol 4-phosphate cytidylyltransferase region; sequence MVHIQADGAR…RLSHNALPDV (247 aa). Positions 248–407 are 2-C-methyl-D-erythritol 2,4-cyclodiphosphate synthase; sequence RTGNGYDVHQ…ATVVFQGKPQ (160 aa). A divalent metal cation-binding residues include aspartate 254 and histidine 256. 4-CDP-2-C-methyl-D-erythritol 2-phosphate contacts are provided by residues 254-256 and 280-281; these read DVH and HS. Residue histidine 288 coordinates a divalent metal cation. 4-CDP-2-C-methyl-D-erythritol 2-phosphate contacts are provided by residues 302–304, 378–381, phenylalanine 385, and arginine 388; these read DIG and TTNE.

This sequence in the N-terminal section; belongs to the IspD/TarI cytidylyltransferase family. IspD subfamily. In the C-terminal section; belongs to the IspF family. A divalent metal cation is required as a cofactor.

It catalyses the reaction 2-C-methyl-D-erythritol 4-phosphate + CTP + H(+) = 4-CDP-2-C-methyl-D-erythritol + diphosphate. The enzyme catalyses 4-CDP-2-C-methyl-D-erythritol 2-phosphate = 2-C-methyl-D-erythritol 2,4-cyclic diphosphate + CMP. Its pathway is isoprenoid biosynthesis; isopentenyl diphosphate biosynthesis via DXP pathway; isopentenyl diphosphate from 1-deoxy-D-xylulose 5-phosphate: step 2/6. It functions in the pathway isoprenoid biosynthesis; isopentenyl diphosphate biosynthesis via DXP pathway; isopentenyl diphosphate from 1-deoxy-D-xylulose 5-phosphate: step 4/6. Functionally, bifunctional enzyme that catalyzes the formation of 4-diphosphocytidyl-2-C-methyl-D-erythritol from CTP and 2-C-methyl-D-erythritol 4-phosphate (MEP) (IspD), and catalyzes the conversion of 4-diphosphocytidyl-2-C-methyl-D-erythritol 2-phosphate (CDP-ME2P) to 2-C-methyl-D-erythritol 2,4-cyclodiphosphate (ME-CPP) with a corresponding release of cytidine 5-monophosphate (CMP) (IspF). This chain is Bifunctional enzyme IspD/IspF, found in Allorhizobium ampelinum (strain ATCC BAA-846 / DSM 112012 / S4) (Agrobacterium vitis (strain S4)).